A 162-amino-acid polypeptide reads, in one-letter code: uncharacterized protein (162 aa).

The signal sequence occupies residues 1 to 19; it reads MARVYILFFSVFFVFPLFS. 2 helical membrane-spanning segments follow: residues 53–75 and 105–127; these read LSIG…IRLI and IVFG…YRAV.

The protein localises to the cell membrane. This is an uncharacterized protein from Treponema pallidum (strain Nichols).